The sequence spans 222 residues: uncharacterized protein (222 aa).

The protein belongs to the ycf73 family.

Its subcellular location is the plastid. It localises to the chloroplast. This is an uncharacterized protein from Oryza nivara (Indian wild rice).